We begin with the raw amino-acid sequence, 434 residues long: Methylenetetrahydrofolate--tRNA-(uracil-5-)-methyltransferase TrmFO (434 aa).

An FAD-binding site is contributed by 9-14 (GAGLAG).

The protein belongs to the MnmG family. TrmFO subfamily. The cofactor is FAD.

The protein resides in the cytoplasm. The catalysed reaction is uridine(54) in tRNA + (6R)-5,10-methylene-5,6,7,8-tetrahydrofolate + NADH + H(+) = 5-methyluridine(54) in tRNA + (6S)-5,6,7,8-tetrahydrofolate + NAD(+). It carries out the reaction uridine(54) in tRNA + (6R)-5,10-methylene-5,6,7,8-tetrahydrofolate + NADPH + H(+) = 5-methyluridine(54) in tRNA + (6S)-5,6,7,8-tetrahydrofolate + NADP(+). Functionally, catalyzes the folate-dependent formation of 5-methyl-uridine at position 54 (M-5-U54) in all tRNAs. The sequence is that of Methylenetetrahydrofolate--tRNA-(uracil-5-)-methyltransferase TrmFO from Bacillus licheniformis (strain ATCC 14580 / DSM 13 / JCM 2505 / CCUG 7422 / NBRC 12200 / NCIMB 9375 / NCTC 10341 / NRRL NRS-1264 / Gibson 46).